Here is a 702-residue protein sequence, read N- to C-terminus: Ribosomal RNA large subunit methyltransferase K/L (702 aa).

A THUMP domain is found at 43–154 (LVYQSLMWSR…KETASIALDL (112 aa)).

The protein belongs to the methyltransferase superfamily. RlmKL family.

It is found in the cytoplasm. It carries out the reaction guanosine(2445) in 23S rRNA + S-adenosyl-L-methionine = N(2)-methylguanosine(2445) in 23S rRNA + S-adenosyl-L-homocysteine + H(+). It catalyses the reaction guanosine(2069) in 23S rRNA + S-adenosyl-L-methionine = N(2)-methylguanosine(2069) in 23S rRNA + S-adenosyl-L-homocysteine + H(+). Functionally, specifically methylates the guanine in position 2445 (m2G2445) and the guanine in position 2069 (m7G2069) of 23S rRNA. The polypeptide is Ribosomal RNA large subunit methyltransferase K/L (Shigella sonnei (strain Ss046)).